Reading from the N-terminus, the 282-residue chain is Bifunctional protein FolD (282 aa).

Residues 164 to 166 and Ser-189 contribute to the NADP(+) site; that span reads GRS.

Belongs to the tetrahydrofolate dehydrogenase/cyclohydrolase family. As to quaternary structure, homodimer.

The catalysed reaction is (6R)-5,10-methylene-5,6,7,8-tetrahydrofolate + NADP(+) = (6R)-5,10-methenyltetrahydrofolate + NADPH. The enzyme catalyses (6R)-5,10-methenyltetrahydrofolate + H2O = (6R)-10-formyltetrahydrofolate + H(+). Its pathway is one-carbon metabolism; tetrahydrofolate interconversion. Catalyzes the oxidation of 5,10-methylenetetrahydrofolate to 5,10-methenyltetrahydrofolate and then the hydrolysis of 5,10-methenyltetrahydrofolate to 10-formyltetrahydrofolate. This is Bifunctional protein FolD from Streptococcus suis (strain 98HAH33).